The primary structure comprises 361 residues: Spermidine/putrescine import ATP-binding protein PotA (361 aa).

The region spanning 4–234 (LEIKNVVKRF…PKNRFVADFL (231 aa)) is the ABC transporter domain. 36-43 (GPSGCGKT) contacts ATP.

The protein belongs to the ABC transporter superfamily. Spermidine/putrescine importer (TC 3.A.1.11.1) family. As to quaternary structure, the complex is composed of two ATP-binding proteins (PotA), two transmembrane proteins (PotB and PotC) and a solute-binding protein (PotD).

The protein resides in the cell inner membrane. The catalysed reaction is ATP + H2O + polyamine-[polyamine-binding protein]Side 1 = ADP + phosphate + polyamineSide 2 + [polyamine-binding protein]Side 1.. In terms of biological role, part of the ABC transporter complex PotABCD involved in spermidine/putrescine import. Responsible for energy coupling to the transport system. The polypeptide is Spermidine/putrescine import ATP-binding protein PotA (Chromobacterium violaceum (strain ATCC 12472 / DSM 30191 / JCM 1249 / CCUG 213 / NBRC 12614 / NCIMB 9131 / NCTC 9757 / MK)).